The primary structure comprises 311 residues: E3 ubiquitin-protein ligase RNF126 (311 aa).

An N-acetylalanine modification is found at Ala2. Ser5 carries the post-translational modification Phosphoserine. Residues Ser5 to Ala100 are required for interaction with BAG6. Cys13, Cys16, Cys29, and Cys32 together coordinate Zn(2+). A C4-type zinc finger spans residues Cys13–Cys32. Disordered stretches follow at residues Glu42–Pro64 and Pro94–Thr132. The span at Thr47 to Ser61 shows a compositional bias: polar residues. Residues Asp103–His116 are compositionally biased toward basic and acidic residues. Over residues Pro117 to Thr132 the composition is skewed to basic residues. Residues Thr200–Asn304 form a sufficient for interaction with AICDA region. The RING-type zinc-finger motif lies at Cys229 to Arg270. Positions Asn277–Ser311 are disordered. Over residues Ser289–Ser311 the composition is skewed to low complexity.

In terms of assembly, interacts with CCDC50, EGFR, FLT3 and SCAMP3. Interacts with BAG6 (via ubiquitin-like domain); required for BAG6-dependent ubiquitination of proteins mislocalized to the cytosol. Interacts with CDKN1A. Interacts with AICDA. Post-translationally, ubiquitinated. May undergo autoubiquitination. As to expression, highly expressed in liver and testis.

It is found in the cytoplasm. Its subcellular location is the nucleus. The catalysed reaction is S-ubiquitinyl-[E2 ubiquitin-conjugating enzyme]-L-cysteine + [acceptor protein]-L-lysine = [E2 ubiquitin-conjugating enzyme]-L-cysteine + N(6)-ubiquitinyl-[acceptor protein]-L-lysine.. It functions in the pathway protein modification; protein ubiquitination. E3 ubiquitin-protein ligase that mediates ubiquitination oF target proteins. Depending on the associated E2 ligase, mediates 'Lys-27'-, 'Lys-29'-, 'Lys-48'- and/or 'Lys-63'-linked polyubiquitination of substrates. Part of a BAG6-dependent quality control process ensuring that proteins of the secretory pathway that are mislocalized to the cytosol are degraded by the proteasome. Probably acts by providing the ubiquitin ligase activity associated with the BAG6 complex and be responsible for ubiquitination of the hydrophobic mislocalized proteins and their targeting to the proteasome. May also play a role in the endosomal recycling of IGF2R, the cation-independent mannose-6-phosphate receptor. May play a role in the endosomal sorting and degradation of several membrane receptors including EGFR, FLT3, MET and CXCR4, by mediating their ubiquitination. By ubiquitinating CDKN1A/p21 and targeting it for degradation, may also promote cell proliferation. May monoubiquitinate AICDA. Acts as a regulator of DNA repair by mediating 'Lys-27'- and 'Lys-29'-linked polyubiquitination of MRE11, thereby promoting the exonuclease activity of MRE11. In Homo sapiens (Human), this protein is E3 ubiquitin-protein ligase RNF126.